The following is a 452-amino-acid chain: FERM domain-containing protein 8 (452 aa).

Residues 28–374 (MDVIIYLIND…YCIELSQSTE (347 aa)) enclose the FERM domain. Residues 373 to 387 (TESPASDSTPGNSQL) are compositionally biased toward polar residues. Residues 373–395 (TESPASDSTPGNSQLSEKRSKLK) are disordered.

It localises to the cytoplasm. Its subcellular location is the cytosol. It is found in the cell membrane. In terms of biological role, promotes the cell surface stability of RHBDF1 and RHBDF2 and prevents their degradation via the endolysosomal pathway. By acting on RHBDF proteins, involved in ADAM17-mediated ligand shedding. May negatively regulate Wnt signaling. The sequence is that of FERM domain-containing protein 8 (frmd8) from Xenopus laevis (African clawed frog).